We begin with the raw amino-acid sequence, 205 residues long: Molybdenum cofactor guanylyltransferase (205 aa).

GTP is bound by residues 14–16 (LAG), K27, D77, and D107. D107 contributes to the Mg(2+) binding site.

Belongs to the MobA family. In terms of assembly, monomer. Mg(2+) is required as a cofactor.

It localises to the cytoplasm. The enzyme catalyses Mo-molybdopterin + GTP + H(+) = Mo-molybdopterin guanine dinucleotide + diphosphate. In terms of biological role, transfers a GMP moiety from GTP to Mo-molybdopterin (Mo-MPT) cofactor (Moco or molybdenum cofactor) to form Mo-molybdopterin guanine dinucleotide (Mo-MGD) cofactor. This is Molybdenum cofactor guanylyltransferase from Burkholderia cenocepacia (strain HI2424).